The chain runs to 172 residues: Glutamyl-tRNA(Gln) amidotransferase subunit C-3, mitochondrial (172 aa).

Residues 49-71 (KHPSKVPQRPNKSTIDGQSTPTR) form a disordered region. A compositionally biased stretch (polar residues) spans 58-71 (PNKSTIDGQSTPTR).

The protein belongs to the GatC family. As to quaternary structure, subunit of the heterotrimeric GatCAB amidotransferase (AdT) complex, composed of A, B and C subunits.

Its subcellular location is the mitochondrion. It carries out the reaction L-glutamyl-tRNA(Gln) + L-glutamine + ATP + H2O = L-glutaminyl-tRNA(Gln) + L-glutamate + ADP + phosphate + H(+). Its function is as follows. Allows the formation of correctly charged Gln-tRNA(Gln) through the transamidation of misacylated Glu-tRNA(Gln) in the mitochondria. The reaction takes place in the presence of glutamine and ATP through an activated gamma-phospho-Glu-tRNA(Gln). The protein is Glutamyl-tRNA(Gln) amidotransferase subunit C-3, mitochondrial of Culex quinquefasciatus (Southern house mosquito).